Reading from the N-terminus, the 199-residue chain is Large ribosomal subunit protein mL51 (199 aa).

Residues Met1–Thr15 constitute a mitochondrion transit peptide.

This sequence belongs to the mitochondrion-specific ribosomal protein mL51 family. In terms of assembly, component of the mitochondrial ribosome large subunit (39S) which comprises a 16S rRNA and about 50 distinct proteins.

It localises to the mitochondrion. This is Large ribosomal subunit protein mL51 (mrpl-51) from Caenorhabditis elegans.